The sequence spans 104 residues: Growth-regulated protein homolog (104 aa).

Residues 1–31 (MAPAATAAAPRLLRAALLLLLLVAAGRRAAG) form the signal peptide. 2 cysteine pairs are disulfide-bonded: cysteine 40/cysteine 66 and cysteine 42/cysteine 82.

The protein belongs to the intercrine alpha (chemokine CxC) family.

The protein resides in the secreted. In terms of biological role, plays a role in monocyte adhesion to the endothelium. This is Growth-regulated protein homolog from Oryctolagus cuniculus (Rabbit).